The chain runs to 133 residues: Holo-[acyl-carrier-protein] synthase (133 aa).

Mg(2+)-binding residues include aspartate 8 and glutamate 57.

It belongs to the P-Pant transferase superfamily. AcpS family. Mg(2+) serves as cofactor.

It is found in the cytoplasm. It carries out the reaction apo-[ACP] + CoA = holo-[ACP] + adenosine 3',5'-bisphosphate + H(+). Functionally, transfers the 4'-phosphopantetheine moiety from coenzyme A to a Ser of acyl-carrier-protein. The protein is Holo-[acyl-carrier-protein] synthase of Bartonella bacilliformis (strain ATCC 35685 / KC583 / Herrer 020/F12,63).